The primary structure comprises 257 residues: Imidazole glycerol phosphate synthase subunit HisF (257 aa).

Catalysis depends on residues Asp11 and Asp130.

The protein belongs to the HisA/HisF family. In terms of assembly, heterodimer of HisH and HisF.

It localises to the cytoplasm. The catalysed reaction is 5-[(5-phospho-1-deoxy-D-ribulos-1-ylimino)methylamino]-1-(5-phospho-beta-D-ribosyl)imidazole-4-carboxamide + L-glutamine = D-erythro-1-(imidazol-4-yl)glycerol 3-phosphate + 5-amino-1-(5-phospho-beta-D-ribosyl)imidazole-4-carboxamide + L-glutamate + H(+). The protein operates within amino-acid biosynthesis; L-histidine biosynthesis; L-histidine from 5-phospho-alpha-D-ribose 1-diphosphate: step 5/9. IGPS catalyzes the conversion of PRFAR and glutamine to IGP, AICAR and glutamate. The HisF subunit catalyzes the cyclization activity that produces IGP and AICAR from PRFAR using the ammonia provided by the HisH subunit. The polypeptide is Imidazole glycerol phosphate synthase subunit HisF (Shewanella sp. (strain ANA-3)).